The chain runs to 136 residues: Prefoldin subunit alpha (136 aa).

The protein belongs to the prefoldin subunit alpha family. As to quaternary structure, heterohexamer of two alpha and four beta subunits.

It is found in the cytoplasm. Its function is as follows. Molecular chaperone capable of stabilizing a range of proteins. Seems to fulfill an ATP-independent, HSP70-like function in archaeal de novo protein folding. This is Prefoldin subunit alpha from Pyrobaculum arsenaticum (strain DSM 13514 / JCM 11321 / PZ6).